The chain runs to 506 residues: Maturase K (506 aa).

The protein belongs to the intron maturase 2 family. MatK subfamily.

It localises to the plastid. Its subcellular location is the chloroplast. Usually encoded in the trnK tRNA gene intron. Probably assists in splicing its own and other chloroplast group II introns. This Hydrangea macrophylla (Bigleaf hydrangea) protein is Maturase K.